The following is a 628-amino-acid chain: Nuclear receptor subfamily 4 group A member 3 (628 aa).

An activation function (AF)-1 domain region spans residues 1-112 (MPCVQAQYSP…HHHHHHHHHH (112 aa)). Residues 1–140 (MPCVQAQYSP…PSTSMYFKQS (140 aa)) form a required for DNA-PK heterotrimer region. The tract at residues 1 to 293 (MPCVQAQYSP…NRSSSSGEGT (293 aa)) is interaction with NCOA1, NCOA2, NCOA3 and KAT2B. 2 disordered regions span residues 96–163 (HGYH…DELP) and 269–290 (ASSL…SSSG). Residues 97-113 (GYHHHHHHHHHHHHHHQ) show a composition bias toward basic residues. Residues 142–151 (PSTPTTPGFP) show a composition bias toward pro residues. The segment covering 270 to 289 (SSLLGESPSLPSPPNRSSSS) has biased composition (low complexity). Residues 291–366 (EGTCAVCGDN…VGMVKEVVRT (76 aa)) constitute a DNA-binding region (nuclear receptor). 2 NR C4-type zinc fingers span residues 294 to 314 (CAVC…CEGC) and 330 to 354 (CLAN…FQKC). Residues 366-396 (TDSLKGRRGRLPSKPKSPLQQEPSQPSPPSP) are disordered. Positions 379-389 (KPKSPLQQEPS) are enriched in low complexity. Positions 381–628 (KSPLQQEPSQ…DKLFLDTLPF (248 aa)) are interaction with KAT2B. Positions 396–625 (PPICMMNALV…SVIDKLFLDT (230 aa)) constitute an NR LBD domain.

This sequence belongs to the nuclear hormone receptor family. NR4 subfamily. Interacts with SIX3 (via homeobox); differentially regulates the transcriptional activities of NR4A3. Interacts with NR3C1 (via nuclear receptor DNA-binding domain); the interactions represses transcription activity of NR4A3 on the POMC promoter Nur response element (NurRE). Interacts with TRIM28; the interactions potentiates NR4A3 activity on NurRE promoter. Binds DNA as a monomer and homodimer. Interacts with PARP1; activates PARP1 by improving acetylation of PARP1 and suppressing the interaction between PARP1 and SIRT1. Interacts with the constituents of DNA-PK heterotrimer PRKDC, XRCC6 and XRCC5; phosphorylates and prevents NR4A3 ubiquitinylation and degradation. Interacts with NCOA2; potentiates the activity of the NR4A3. Interacts with NCOA1, NCOA3, MED1 and KAT2B. Interacts with EP300 and NCOA2; mediates the recruitment of MED1 in the coactivator complex. Post-translationally, phosphorylated by PRKDC. In terms of tissue distribution, expressed at high levels in cultured apoptotic neuronal cells and fetal brain, and at low level in adult brain.

It localises to the nucleus. In terms of biological role, transcriptional activator that binds to regulatory elements in promoter regions in a cell- and response element (target)-specific manner. Induces gene expression by binding as monomers to the NR4A1 response element (NBRE) 5'-AAAAGGTCA-3' site and as homodimers to the Nur response element (NurRE) site in the promoter of their regulated target genes. Plays a role in the regulation of proliferation, survival and differentiation of many different cell types and also in metabolism and inflammation. Mediates proliferation of vascular smooth muscle, myeloid progenitor cell and type B pancreatic cells; promotes mitogen-induced vascular smooth muscle cell proliferation through transactivation of SKP2 promoter by binding a NBRE site. Upon PDGF stimulation, stimulates vascular smooth muscle cell proliferation by regulating CCND1 and CCND2 expression. In islets, induces type B pancreatic cell proliferation through up-regulation of genes that activate cell cycle, as well as genes that cause degradation of the CDKN1A. Negatively regulates myeloid progenitor cell proliferation by repressing RUNX1 in a NBRE site-independent manner. During inner ear, plays a role as a key mediator of the proliferative growth phase of semicircular canal development. Also mediates survival of neuron and smooth muscle cells; mediates CREB-induced neuronal survival, and during hippocampus development, plays a critical role in pyramidal cell survival and axonal guidance. Is required for S phase entry of the cell cycle and survival of smooth muscle cells by inducing CCND1, resulting in RB1 phosphorylation. Binds to NBRE motif in CCND1 promoter, resulting in the activation of the promoter and CCND1 transcription. Also plays a role in inflammation; Upon TNF stimulation, mediates monocyte adhesion by inducing the expression of VCAM1 and ICAM1 by binding to the NBRE consensus site. In mast cells activated by Fc-epsilon receptor cross-linking, promotes the synthesis and release of cytokines but impairs events leading to degranulation. Also plays a role in metabolism; by modulating feeding behavior; and by playing a role in energy balance by inhibiting the glucocorticoid-induced orexigenic neuropeptides AGRP expression, at least in part by forming a complex with activated NR3C1 on the AGRP-glucocorticoid response element (GRE), and thus weakening the DNA binding activity of NR3C1. Upon catecholamines stimulation, regulates gene expression that controls oxidative metabolism in skeletal muscle. Plays a role in glucose transport by regulating translocation of the SLC2A4 glucose transporter to the cell surface. Finally, during gastrulation plays a crucial role in the formation of anterior mesoderm by controlling cell migration. Also participates in cardiac hypertrophy by activating PARP1. The chain is Nuclear receptor subfamily 4 group A member 3 (Nr4a3) from Rattus norvegicus (Rat).